The primary structure comprises 163 residues: uncharacterized protein (163 aa).

The protein belongs to the mimivirus L242/L243 family.

This is an uncharacterized protein from Acanthamoeba polyphaga (Amoeba).